The primary structure comprises 289 residues: Pyridoxal kinase PdxY (289 aa).

Substrate contacts are provided by residues S9 and 44 to 45; that span reads TQ. ATP is bound by residues D112, A144, E149, K183, and 210 to 213; that span reads RPLV. D225 is a substrate binding site.

It belongs to the pyridoxine kinase family. PdxY subfamily. In terms of assembly, homodimer. Mg(2+) serves as cofactor.

The catalysed reaction is pyridoxal + ATP = pyridoxal 5'-phosphate + ADP + H(+). It functions in the pathway cofactor metabolism; pyridoxal 5'-phosphate salvage; pyridoxal 5'-phosphate from pyridoxal: step 1/1. Functionally, pyridoxal kinase involved in the salvage pathway of pyridoxal 5'-phosphate (PLP). Catalyzes the phosphorylation of pyridoxal to PLP. The protein is Pyridoxal kinase PdxY of Proteus mirabilis.